An 883-amino-acid polypeptide reads, in one-letter code: Phosphoenolpyruvate carboxylase (883 aa).

Residues His138 and Lys546 contribute to the active site.

It belongs to the PEPCase type 1 family. The cofactor is Mg(2+).

The catalysed reaction is oxaloacetate + phosphate = phosphoenolpyruvate + hydrogencarbonate. Forms oxaloacetate, a four-carbon dicarboxylic acid source for the tricarboxylic acid cycle. This is Phosphoenolpyruvate carboxylase from Escherichia coli O127:H6 (strain E2348/69 / EPEC).